A 479-amino-acid chain; its full sequence is NADH oxidase (479 aa).

FAD contacts are provided by residues 8–12, aspartate 33, cysteine 43, valine 80, 111–114, lysine 149, and tyrosine 177; these read GVNHA and ASGA. Histidine 11 functions as the Proton acceptor in the catalytic mechanism. Catalysis depends on cysteine 43, which acts as the Redox-active. Residue cysteine 43 is modified to Cysteine sulfinic acid (-SO2H). NAD(+)-binding positions include 170–185, aspartate 197, and glycine 264; that span reads VAIV…LAEA. FAD contacts are provided by residues 295–305, leucine 322, alanine 323, and threonine 324; that span reads LNHENVYVIGG. Alanine 353 contacts NAD(+). Phenylalanine 450 contributes to the FAD binding site.

Belongs to the class-III pyridine nucleotide-disulfide oxidoreductase family. FAD is required as a cofactor.

The enzyme catalyses 2 NADH + O2 + 2 H(+) = 2 NAD(+) + 2 H2O. Catalyzes the four-electron reduction of molecular oxygen to water. The sequence is that of NADH oxidase (nox) from Mycoplasma pneumoniae (strain ATCC 29342 / M129 / Subtype 1) (Mycoplasmoides pneumoniae).